We begin with the raw amino-acid sequence, 115 residues long: Large ribosomal subunit protein uL18 (115 aa).

The tract at residues 1-24 is disordered; the sequence is MISKPDKNKLRQKRHTRVRGKISG. Basic residues predominate over residues 10-20; sequence LRQKRHTRVRG.

This sequence belongs to the universal ribosomal protein uL18 family. Part of the 50S ribosomal subunit; part of the 5S rRNA/L5/L18/L25 subcomplex. Contacts the 5S and 23S rRNAs.

In terms of biological role, this is one of the proteins that bind and probably mediate the attachment of the 5S RNA into the large ribosomal subunit, where it forms part of the central protuberance. The sequence is that of Large ribosomal subunit protein uL18 from Lactococcus lactis subsp. cremoris (strain MG1363).